Here is a 452-residue protein sequence, read N- to C-terminus: Scaffold protein ILK (452 aa).

5 ANK repeats span residues 2-30 (DDIF…LNQG), 31-63 (DDHG…INVM), 64-96 (NRGD…INAV), 97-129 (NEHG…VSIA), and 130-174 (NKYS…GTTR). A Protein kinase domain is found at 193 to 446 (LSLSQKLNEN…PKFDMIVPIL (254 aa)). ATP contacts are provided by Asn-200, Asn-202, Ser-204, His-270, Met-272, and Asn-279. Asp-339 serves as a coordination point for Mg(2+). Residue Lys-341 participates in ATP binding. Residues 363-371 (KKPEEINRR) carry the Nuclear localization signal motif.

It belongs to the protein kinase superfamily. TKL Ser/Thr protein kinase family. In terms of assembly, interacts with PXN/PAXILLIN (via LD motif 4).

It localises to the cell junction. It is found in the focal adhesion. Its subcellular location is the cell membrane. The protein localises to the cell projection. The protein resides in the lamellipodium. It localises to the cytoplasm. It is found in the myofibril. Its subcellular location is the sarcomere. The protein localises to the nucleus. The protein resides in the cytoskeleton. It localises to the microtubule organizing center. It is found in the centrosome. Its subcellular location is the cell cortex. In terms of biological role, scaffold protein which mediates protein-protein interactions during a range of cellular events including focal adhesion assembly, cell adhesion and cell migration. The chain is Scaffold protein ILK from Gallus gallus (Chicken).